The primary structure comprises 120 residues: NAD(P)H-quinone oxidoreductase subunit 3, chloroplastic (120 aa).

The next 3 helical transmembrane spans lie at 9 to 29 (IFWAFLIISSLIPILAFFVSG), 64 to 84 (MFALVFVVFDVETVFLYPWAM), and 88 to 108 (VLGISVFVEALIFVLILIVGL).

Belongs to the complex I subunit 3 family. In terms of assembly, NDH is composed of at least 16 different subunits, 5 of which are encoded in the nucleus.

It is found in the plastid. The protein localises to the chloroplast thylakoid membrane. It catalyses the reaction a plastoquinone + NADH + (n+1) H(+)(in) = a plastoquinol + NAD(+) + n H(+)(out). It carries out the reaction a plastoquinone + NADPH + (n+1) H(+)(in) = a plastoquinol + NADP(+) + n H(+)(out). NDH shuttles electrons from NAD(P)H:plastoquinone, via FMN and iron-sulfur (Fe-S) centers, to quinones in the photosynthetic chain and possibly in a chloroplast respiratory chain. The immediate electron acceptor for the enzyme in this species is believed to be plastoquinone. Couples the redox reaction to proton translocation, and thus conserves the redox energy in a proton gradient. This chain is NAD(P)H-quinone oxidoreductase subunit 3, chloroplastic, found in Daucus carota (Wild carrot).